The following is a 414-amino-acid chain: Eukaryotic initiation factor 4A (414 aa).

The short motif at 41–69 (ESFDDMGLQENLLRGIYAYGFEKPSAIQQ) is the Q motif element. Residues 72–242 (IVPFCKGLDV…RKFMNKPVRI (171 aa)) enclose the Helicase ATP-binding domain. Position 85-92 (85-92 (AQSGTGKT)) interacts with ATP. Residues 190 to 193 (DEAD) carry the DEAD box motif. The region spanning 253–414 (GIKQFYVNVE…ELPANVADLL (162 aa)) is the Helicase C-terminal domain.

Belongs to the DEAD box helicase family. eIF4A subfamily. In terms of assembly, eIF4F is a multi-subunit complex, the composition of which varies with external and internal environmental conditions. It is composed of at least EIF4A, EIF4E and EIF4G.

It carries out the reaction ATP + H2O = ADP + phosphate + H(+). In terms of biological role, ATP-dependent RNA helicase which is a subunit of the eIF4F complex involved in cap recognition and is required for mRNA binding to ribosome. In the current model of translation initiation, eIF4A unwinds RNA secondary structures in the 5'-UTR of mRNAs which is necessary to allow efficient binding of the small ribosomal subunit, and subsequent scanning for the initiator codon. This Triticum aestivum (Wheat) protein is Eukaryotic initiation factor 4A.